We begin with the raw amino-acid sequence, 405 residues long: L-carnitine CoA-transferase (405 aa).

2 residues coordinate CoA: K97 and R104. Residue D169 is the Nucleophile of the active site.

Belongs to the CoA-transferase III family. CaiB subfamily. Homodimer.

The protein resides in the cytoplasm. It carries out the reaction crotonobetainyl-CoA + (R)-carnitine = crotonobetaine + (R)-carnitinyl-CoA. It catalyses the reaction 4-(trimethylamino)butanoyl-CoA + (R)-carnitine = (R)-carnitinyl-CoA + 4-(trimethylamino)butanoate. It functions in the pathway amine and polyamine metabolism; carnitine metabolism. Catalyzes the reversible transfer of the CoA moiety from gamma-butyrobetainyl-CoA to L-carnitine to generate L-carnitinyl-CoA and gamma-butyrobetaine. Is also able to catalyze the reversible transfer of the CoA moiety from gamma-butyrobetainyl-CoA or L-carnitinyl-CoA to crotonobetaine to generate crotonobetainyl-CoA. This Salmonella enteritidis PT4 (strain P125109) protein is L-carnitine CoA-transferase.